The sequence spans 448 residues: Probable glycine dehydrogenase (decarboxylating) subunit 1 (448 aa).

It belongs to the GcvP family. N-terminal subunit subfamily. As to quaternary structure, the glycine cleavage system is composed of four proteins: P, T, L and H. In this organism, the P 'protein' is a heterodimer of two subunits.

It carries out the reaction N(6)-[(R)-lipoyl]-L-lysyl-[glycine-cleavage complex H protein] + glycine + H(+) = N(6)-[(R)-S(8)-aminomethyldihydrolipoyl]-L-lysyl-[glycine-cleavage complex H protein] + CO2. Functionally, the glycine cleavage system catalyzes the degradation of glycine. The P protein binds the alpha-amino group of glycine through its pyridoxal phosphate cofactor; CO(2) is released and the remaining methylamine moiety is then transferred to the lipoamide cofactor of the H protein. The polypeptide is Probable glycine dehydrogenase (decarboxylating) subunit 1 (Listeria monocytogenes serotype 4a (strain HCC23)).